An 80-amino-acid chain; its full sequence is Serine protease inhibitor Kazal-type 6 (80 aa).

Residues 1 to 23 form the signal peptide; the sequence is MKTSGVFLLLSLALFCFFSGVFG. Residue Gln24 is modified to Pyrrolidone carboxylic acid. One can recognise a Kazal-like domain in the interval 24–80; the sequence is QGAQVDCAEFKDPKVYCTRESNPHCGSDGQTYGNKCAFCKAVMKSGGKINLKHRGKC. Disulfide bonds link Cys30–Cys62, Cys40–Cys59, and Cys48–Cys80.

Seminal plasma.

Its subcellular location is the secreted. Its function is as follows. Serine protease inhibitor selective for kallikreins. Efficiently inhibits KLK4, KLK5, KLK6, KLK7, KLK12, KLK13 and KLK14. Doesn't inhibit KLK8. Inhibits acrosin, trypsin, and chymotrypsin. The sequence is that of Serine protease inhibitor Kazal-type 6 (SPINK6) from Bos taurus (Bovine).